A 385-amino-acid polypeptide reads, in one-letter code: Taurine hydroxylase-like protein SAT17 (385 aa).

It functions in the pathway mycotoxin biosynthesis. In terms of biological role, taurine hydroxylase-like protein; part of the satratoxin SC3 cluster involved in the biosynthesis of satratoxins, trichothecene mycotoxins that are associated with human food poisonings. Satratoxins are suggested to be made by products of multiple gene clusters (SC1, SC2 and SC3) that encode 21 proteins in all, including polyketide synthases, acetyltransferases, and other enzymes expected to modify the trichothecene skeleton. SC1 encodes 10 proteins, SAT1 to SAT10. The largest are SAT8, which encodes a putative polyketide synthase (PKS) with a conventional non-reducing architecture, and SAT10, a putative protein containing four ankyrin repeats and thus may be involved in protein scaffolding. The putative short-chain reductase SAT3 may assist the PKS in some capacity. SAT6 contains a secretory lipase domain and acts probably as a trichothecene esterase. SAT5 encodes a putative acetyltransferase, and so, with SAT6, may affect endogenous protection from toxicity. The probable transcription factor SAT9 may regulate the expression of the SC1 cluster. SC2 encodes proteins SAT11 to SAT16, the largest of which encodes the putative reducing PKS SAT13. SAT11 is a cytochrome P450 monooxygenase, while SAT14 and SAT16 are probable acetyltransferases. The SC2 cluster may be regulated by the transcription factor SAT15. SC3 is a small cluster that encodes 5 proteins, SAT17 to SAT21. SAT21 is a putative MFS-type transporter which may have a role in exporting secondary metabolites. The four other proteins putatively encoded in SC3 include the taurine hydroxylase-like protein SAT17, the O-methyltransferase SAT18, the acetyltransferase SAT19, and the Cys6-type zinc finger SAT20, the latter being probably involved in regulation of SC3 expression. The sequence is that of Taurine hydroxylase-like protein SAT17 from Stachybotrys chartarum (strain CBS 109288 / IBT 7711) (Toxic black mold).